The chain runs to 1175 residues: Chromosome partition protein Smc (1175 aa).

32-39 lines the ATP pocket; it reads PNGCGKSN. Residues 170-504 are a coiled coil; the sequence is VSKYKERRRE…ALKALQEKVK (335 aa). Positions 524–625 constitute an SMC hinge domain; that stretch reads LWSRIAIEPG…YTAPTLEEAL (102 aa). 2 coiled-coil regions span residues 684–918 and 944–1022; these read DESR…FQLK and SQSI…ELLS. The interval 807–849 is disordered; sequence RQAQEATFSRRSLEARRGELSRTIETASQQARSLADEQQRAQD. Positions 817–828 are enriched in basic and acidic residues; sequence RSLEARRGELSR. Over residues 829–838 the composition is skewed to polar residues; that stretch reads TIETASQQAR. Positions 840–849 are enriched in basic and acidic residues; the sequence is LADEQQRAQD.

This sequence belongs to the SMC family. Homodimer.

It is found in the cytoplasm. In terms of biological role, required for chromosome condensation and partitioning. The chain is Chromosome partition protein Smc from Delftia acidovorans (strain DSM 14801 / SPH-1).